The sequence spans 348 residues: Serine/threonine-protein kinase SBK2 (348 aa).

The interval 1-25 (MPGKQSEEGPAEAGASEDSEEEGLG) is disordered. The 269-residue stretch at 62 to 330 (YEEVRPLGQG…IREHLGRPWR (269 aa)) folds into the Protein kinase domain. Residues 68–76 (LGQGCYGRV) and Lys91 each bind ATP. Asp183 functions as the Proton acceptor in the catalytic mechanism.

It belongs to the protein kinase superfamily. Ser/Thr protein kinase family. STKL subfamily.

The catalysed reaction is L-seryl-[protein] + ATP = O-phospho-L-seryl-[protein] + ADP + H(+). It catalyses the reaction L-threonyl-[protein] + ATP = O-phospho-L-threonyl-[protein] + ADP + H(+). This Homo sapiens (Human) protein is Serine/threonine-protein kinase SBK2 (SBK2).